The primary structure comprises 387 residues: Protein RecA (387 aa).

80–87 (GPESSGKT) is an ATP binding site. Residues 348 to 387 (LDDSEVAETEEETTASKTKAKAKKEEKXVETEEIELELQD) form a disordered region. Composition is skewed to acidic residues over residues 349 to 360 (DDSEVAETEEET) and 378 to 387 (TEEIELELQD).

Belongs to the RecA family.

It is found in the cytoplasm. In terms of biological role, can catalyze the hydrolysis of ATP in the presence of single-stranded DNA, the ATP-dependent uptake of single-stranded DNA by duplex DNA, and the ATP-dependent hybridization of homologous single-stranded DNAs. It interacts with LexA causing its activation and leading to its autocatalytic cleavage. In Lactococcus lactis subsp. cremoris (Streptococcus cremoris), this protein is Protein RecA.